A 18141-amino-acid polypeptide reads, in one-letter code: Titin (18141 aa).

A compositionally biased stretch (low complexity) spans M1 to S31. A disordered region spans residues M1–A69. Residues Q32–V47 show a composition bias toward basic and acidic residues. Residues Q48–H62 show a composition bias toward low complexity. Ig-like domains lie at P86 to Q177, P255 to A343, P372 to N461, P471 to Y559, P618 to S708, P751 to R842, P890 to T981, P1024 to I1115, P1158 to R1249, P1291 to R1381, P1424 to Q1515, P1558 to T1643, P1691 to I1781, P1824 to T1917, P1958 to T2050, P2089 to R2180, and P2222 to R2313. A disordered region spans residues E236–L266. The cysteines at positions 393 and 445 are disulfide-linked. Intrachain disulfides connect C1312–C1365, C1446–C1499, and C1579–C1632. C1846 and C1899 are disulfide-bonded. C2111 and C2164 are disulfide-bonded. A compositionally biased stretch (basic and acidic residues) spans S2338–P2347. Residues S2338 to V2357 form a disordered region. Ig-like domains follow at residues P2356–V2449, P2488–K2581, and P2622–E2715. The tract at residues P2731–T2750 is disordered. Over residues G2734–A2746 the composition is skewed to basic and acidic residues. 9 Ig-like domains span residues P2754–K2844, P2891–F2983, P3029–S3116, P3130–N3221, P3263–K3354, P3401–Q3494, P3539–S3625, P3676–T3767, and P3811–S3901. An intrachain disulfide couples C2775 to C2828. C3152 and C3205 are disulfide-bonded. 3 disulfide bridges follow: C3560/C3613, C3698/C3751, and C3832/C3885. The stretch at L3910–D3944 is one TPR 1 repeat. Ig-like domains lie at P3954 to S4047 and P4092 to V4181. A disulfide bridge links C3976 with C4029. Residues A4204–Q4229 are a coiled coil. 2 disordered regions span residues L4226–Q4254 and S4299–S4336. Positions Y4309–V4322 are enriched in polar residues. Ig-like domains follow at residues P4394–V4482, P4497–I4585, P4604–K4692, and P4703–T4791. Residues C4403–P4438 form a TPR 2 repeat. The cysteines at positions 4625 and 4676 are disulfide-linked. 8 disordered regions span residues R4803–V4891, D5318–P5368, R5413–A5648, I5667–K5701, K5718–Q5748, K5775–L5982, K6034–D6350, and E6364–V6393. A compositionally biased stretch (low complexity) spans P4822–F4841. A compositionally biased stretch (basic residues) spans G4852–S4863. Basic and acidic residues-rich tracts occupy residues Q5344 to L5357, R5436 to Q5447, Q5541 to K5552, I5591 to E5621, and P5633 to E5645. One copy of the TPR 3 repeat lies at P5575–E5613. The span at E5681–E5697 shows a compositional bias: acidic residues. Composition is skewed to acidic residues over residues I5779–E5792 and D5818–I5860. The span at R5865 to K5874 shows a compositional bias: basic residues. Positions E5883–E5904 are enriched in acidic residues. The segment covering R5910–K5920 has biased composition (basic residues). The segment covering V5921–S5971 has biased composition (basic and acidic residues). Residues K6034 to T6043 show a composition bias toward basic residues. Acidic residues predominate over residues E6049–E6079. Basic and acidic residues-rich tracts occupy residues P6081–T6092, R6099–L6133, I6141–R6169, E6195–E6209, K6217–W6234, and P6259–K6268. A compositionally biased stretch (acidic residues) spans P6281–L6290. A compositionally biased stretch (basic and acidic residues) spans E6291–A6306. Residues K6307–K6318 are compositionally biased toward basic residues. 2 stretches are compositionally biased toward acidic residues: residues E6325–V6349 and E6364–T6373. 7 consecutive Ig-like domains span residues P6536–I6624, P6633–S6728, P6741–S6830, P6841–N6929, P6942–Q7034, P7066–T7151, and P7189–S7279. A disulfide bridge links C6557 with C6608. Residues C6964 and C7016 are joined by a disulfide bond. Positions K7621 to A7663 form a coiled coil. 29 disordered regions span residues A7773–Q7793, E9414–Q9440, E9485–I9510, E9556–Q9582, E9627–I9652, E9698–Q9724, E9769–E9796, T9838–I9865, E9911–Q9937, E9982–Q10008, E10053–E10080, E10125–I10149, E10195–I10220, E10266–I10291, E10337–E10364, E10408–I10433, E10479–I10504, E10550–Q10576, E10621–E10648, E10692–I10717, E10763–I10788, E10834–Q10860, E10905–E10932, E11047–Q11073, E11118–I11143, E11189–E11216, E11260–Q11286, E11679–D11703, and T11767–P11795. Residues K7774–P7783 are compositionally biased toward basic and acidic residues. 26 stretches are compositionally biased toward acidic residues: residues V9429 to Q9440, V9500 to I9510, V9571 to Q9582, V9642 to I9652, V9713 to Q9724, V9784 to E9796, V9855 to I9865, V9926 to Q9937, V9997 to Q10008, V10068 to E10080, V10139 to I10149, V10210 to I10220, V10281 to I10291, V10352 to E10364, V10423 to I10433, V10494 to I10504, V10565 to Q10576, V10636 to E10648, V10707 to I10717, V10778 to I10788, V10849 to Q10860, V10920 to E10932, V11062 to Q11073, V11133 to I11143, V11204 to E11216, and V11275 to Q11286. Residues K11686–K11699 show a composition bias toward basic residues. Residues P11780–L11792 show a composition bias toward basic and acidic residues. One copy of the TPR 4 repeat lies at K11872–K11905. Disordered regions lie at residues F12003–K12201, T12451–E12471, T12685–P12767, I12943–S12971, I13131–P13154, Q13325–K13349, E13471–N13492, E13554–K13576, K13702–D13792, E13891–K13914, M13951–K13994, T14073–K14094, E14109–T14322, E14354–K14377, P14414–V14448, E14533–K14566, K14583–P14720, and V14756–K14789. Composition is skewed to basic and acidic residues over residues E12022 to H12035, E12044 to K12054, M12124 to S12134, L12183 to K12201, T12457 to E12471, and T12685 to E12709. Acidic residues predominate over residues H12731–S12741. Over residues K12750–K12760 the composition is skewed to basic residues. The span at G13141–P13154 shows a compositional bias: basic and acidic residues. The segment covering K13482–N13492 has biased composition (basic residues). Residues Q13566–P13599 form a TPR 5 repeat. The span at L13733–E13747 shows a compositional bias: basic and acidic residues. Basic residues predominate over residues P13771–S13781. Basic and acidic residues-rich tracts occupy residues V13893–A13906 and E13975–E13984. The segment covering T14221–V14240 has biased composition (basic and acidic residues). Residues K14264–S14274 show a composition bias toward low complexity. Over residues V14282–P14294 the composition is skewed to basic and acidic residues. The span at I14542–A14554 shows a compositional bias: basic and acidic residues. Residues P14555–V14564 show a composition bias toward basic residues. Positions K14583–V14599 are enriched in basic and acidic residues. Residues E14652–E14662 show a composition bias toward low complexity. Polar residues predominate over residues T14664 to A14683. Residues Q14684 to I14697 are compositionally biased toward basic and acidic residues. Residues V14756–P14771 are compositionally biased toward acidic residues. A TPR 6 repeat occupies I14904–K14936. 8 disordered regions span residues E14956–K15208, T15301–D15329, I15425–K15448, I15578–V15597, E15697–E15722, E15825–P15876, E15951–I15973, and Q16181–Q16206. Composition is skewed to basic and acidic residues over residues E14967–L14989, E15024–E15046, Q15069–K15080, K15088–P15097, P15109–L15139, I15169–K15179, Q15189–E15198, V15316–Q15325, I15425–E15437, and I15578–E15589. Acidic residues predominate over residues I15703 to E15716. Basic and acidic residues predominate over residues E15951 to L15964. Residues E16183–E16193 show a composition bias toward acidic residues. Residues E16409–E16470 enclose the SH3 domain. Ig-like domains lie at P16501–I16590, P16625–K16719, P16728–T16811, P16822–D16916, T16919–E17001, P17007–V17091, P17097–T17180, P17184–C17270, and P17277–S17363. A disulfide bridge connects residues C16940 and C16989. A Fibronectin type-III 1 domain is found at A17374–K17467. 2 Ig-like domains span residues P17473 to K17558 and P17563 to Q17653. Cysteines 17494 and 17542 form a disulfide. Fibronectin type-III domains lie at R17660 to F17755, P17760 to S17861, P17862 to S17958, and P17982 to A18078. Residues L17694–Y17728 form a TPR 7 repeat. The segment at S17741–N17771 is disordered.

The protein belongs to the protein kinase superfamily. CAMK Ser/Thr protein kinase family. As to quaternary structure, interacts with Msp300; this interaction mediates the recruitment of Msp300 to the Z-disks. As to expression, expressed in the mesoderm at stage 11, several hours before myoblast fusion, and persists in most muscle cells, somatic, visceral and pharyngeal muscles and their precursors, until the third instar. Isoform A: Expressed in the indirect flight muscle (at protein level).

Its subcellular location is the cytoplasm. The protein resides in the nucleus. It localises to the chromosome. It is found in the myofibril. The protein localises to the sarcomere. Its subcellular location is the z line. Functionally, key component in the assembly and functioning of adult and embryonic striated muscles and muscle tendons. By providing connections at the level of individual microfilaments, it contributes to the fine balance of forces between the two halves of the sarcomere. The size and extensibility of the cross-links are the main determinants of sarcomere extensibility properties of muscle. In non-muscle cells, seems to play a role in chromosome condensation and chromosome segregation during mitosis. Might link the lamina network to chromatin or nuclear actin, or both during interphase. This Drosophila melanogaster (Fruit fly) protein is Titin (sls).